Here is a 574-residue protein sequence, read N- to C-terminus: NADH-ubiquinone oxidoreductase chain 5 (574 aa).

The next 16 membrane-spanning stretches (helical) occupy residues 10 to 30 (VASK…LYMV), 50 to 70 (MMMT…VVMI), 87 to 107 (FINR…MLIF), 111 to 131 (LIIL…LVIY), 141 to 161 (GMIT…AIAW), 181 to 203 (YQAL…SSWL), 211 to 231 (TPVS…FLLI), 240 to 260 (VWWF…MAGL), 280 to 300 (LGMM…FHMV), 301 to 321 (THAM…HSHM), 340 to 360 (TSCL…SGFY), 381 to 401 (LILF…MCVV), 423 to 443 (MLLL…ILPL), 458 to 478 (TLML…TTNM), 489 to 509 (IINY…QFMM), and 554 to 574 (TPMN…LVAI).

The protein belongs to the complex I subunit 5 family.

It localises to the mitochondrion inner membrane. The catalysed reaction is a ubiquinone + NADH + 5 H(+)(in) = a ubiquinol + NAD(+) + 4 H(+)(out). In terms of biological role, core subunit of the mitochondrial membrane respiratory chain NADH dehydrogenase (Complex I) that is believed to belong to the minimal assembly required for catalysis. Complex I functions in the transfer of electrons from NADH to the respiratory chain. The immediate electron acceptor for the enzyme is believed to be ubiquinone. This chain is NADH-ubiquinone oxidoreductase chain 5 (ND5), found in Lumbricus terrestris (Common earthworm).